The following is a 366-amino-acid chain: Phospho-N-acetylmuramoyl-pentapeptide-transferase (366 aa).

10 helical membrane-spanning segments follow: residues 27–47, 71–91, 93–113, 134–154, 174–194, 205–225, 245–265, 268–288, 294–314, and 343–363; these read AALF…INSL, TPTM…LLWA, LSNV…AIGF, LGIE…TALA, FLIN…VGAG, GLAI…AYLA, LAVV…FNAP, AIFM…TVAV, IVMA…IIQV, and QVVI…LSTL.

It belongs to the glycosyltransferase 4 family. MraY subfamily. Mg(2+) serves as cofactor.

Its subcellular location is the cell inner membrane. The catalysed reaction is UDP-N-acetyl-alpha-D-muramoyl-L-alanyl-gamma-D-glutamyl-meso-2,6-diaminopimeloyl-D-alanyl-D-alanine + di-trans,octa-cis-undecaprenyl phosphate = di-trans,octa-cis-undecaprenyl diphospho-N-acetyl-alpha-D-muramoyl-L-alanyl-D-glutamyl-meso-2,6-diaminopimeloyl-D-alanyl-D-alanine + UMP. The protein operates within cell wall biogenesis; peptidoglycan biosynthesis. Catalyzes the initial step of the lipid cycle reactions in the biosynthesis of the cell wall peptidoglycan: transfers peptidoglycan precursor phospho-MurNAc-pentapeptide from UDP-MurNAc-pentapeptide onto the lipid carrier undecaprenyl phosphate, yielding undecaprenyl-pyrophosphoryl-MurNAc-pentapeptide, known as lipid I. The chain is Phospho-N-acetylmuramoyl-pentapeptide-transferase from Rhizobium etli (strain ATCC 51251 / DSM 11541 / JCM 21823 / NBRC 15573 / CFN 42).